The following is a 342-amino-acid chain: Ankyrin repeat domain-containing protein 2A (342 aa).

Residues 1–41 (MASNSEKNPLLSDEKPKSTEENKSSKPESASGSSTSSAMPG) are disordered. Residues 12–26 (SDEKPKSTEENKSSK) are compositionally biased toward basic and acidic residues. Residues 27-37 (PESASGSSTSS) are compositionally biased toward low complexity. ANK repeat units follow at residues 217 to 246 (EEES…NKDE), 250 to 279 (EGRT…SVNA), 283 to 312 (NKNT…AVTL), and 316 to 342 (DEKT…DAFL). Positions 223 and 246 each coordinate a 1,2-diacyl-3-O-(beta-D-galactosyl)-sn-glycerol. Residues Tyr294 and Arg296 each contribute to the a 1,2-diacyl-sn-glycero-3-phospho-(1'-sn-glycerol) site.

In terms of assembly, interacts with TOM20-4, CYTB5-E, CBR1, APX3, APX5, TOC34 and GRF6. Binds to chloroplast outer envelope membrane (OEM) protein targeting signals, as well as to chloroplasts. Interacts with OEP7. Binds to HSP17.8 via its ankyrin repeats, this interaction enhances chaperone activity and chloroplast binding. Also interacts with HSP17.4A, HSP17.6A and HSP18.1. Binds specifically to two chloroplast glycolipids, monogalactosyldiacylglycerol (MGDG) and phosphatidylglycerol (PG). As to expression, ubiquitously expressed at basal level.

The protein localises to the cytoplasm. It is found in the nucleus. It localises to the plastid. The protein resides in the chloroplast outer membrane. Exhibits chaperone activity toward chloroplast outer envelope membrane, mitochondrion outer membrane, endoplasmic reticulum membrane and peroxisomal proteins, by recruiting specific proteins containing a single transmembrane associated with an AKR2A-binding sequence (ABS) and subsequently binding glycolipids (e.g. monogalactosyldiacylglycerol (MGDG) and phosphatidylglycerol (PG)) present in the membrane of the target organelle. Seems to be involved in the regulation of hydrogen peroxide levels during biotic and abiotic stresses by optimizing the ascorbate peroxidase 3 (APX3) hydrogen peroxide-degrading activity. This regulation might be monitored by GRF6. Cytosolic targeting factor for chloroplast outer membrane (COM) proteins that mediates sorting and targeting of nascent chloroplast outer envelope membrane (OEM) proteins to the chloroplast. Facilitates the targeting of OEP7 to chloroplasts. Facilitates the targeting of APX3 to peroxisomes. Involved in cellular metabolism (e.g. peroxisome activity) and required for plant growth and development. This Arabidopsis thaliana (Mouse-ear cress) protein is Ankyrin repeat domain-containing protein 2A.